Reading from the N-terminus, the 429-residue chain is MANVVIVGSQWGDEGKGKIVDLFTEKADYVVRFQGGNNAGHTLVVNGEKHIFHLVPSGILHKGKVCMIGNGVVVDPGVLIREMDRLHEAGIPVTRENLLISRYAHVIMPYHRAMDNARENRKGKTKIGTTGRGIGPCYEDKVARCGVRIHDLSDPKTLGEKIRRNLEEKNFLLERFFGEKPLDAAAMEQEYLAYGERLAPLVDNVSERLQEAVREGRNILFEGAQGTHLDIDHGTYPFVTSSNTVAGNAACGSGIGPTRIDRVLGVVKAYTTRVGGGPFPSELLDETGERMRTRGGEFGATTGRPRRCGWLDMVVVKTAIRLNGLSGLLITKLDVLTGIPKLKIVTSYKCGPRKIEFMPPELEALEACEPVYEEFHGWEEDIGSVRKFTDLPVNTRRYLQALEEMAGVPLMVVSVGPARDETIVLEYPF.

GTP-binding positions include 12-18 and 40-42; these read GDEGKGK and GHT. The active-site Proton acceptor is the Asp13. 2 residues coordinate Mg(2+): Asp13 and Gly40. IMP contacts are provided by residues 13-16, 38-41, Thr130, Arg144, Gln225, Thr240, and Arg304; these read DEGK and NAGH. The active-site Proton donor is His41. 300 to 306 is a substrate binding site; it reads ATTGRPR. GTP-binding positions include Arg306, 332-334, and 414-416; these read KLD and SVG.

This sequence belongs to the adenylosuccinate synthetase family. As to quaternary structure, homodimer. Mg(2+) serves as cofactor.

Its subcellular location is the cytoplasm. It carries out the reaction IMP + L-aspartate + GTP = N(6)-(1,2-dicarboxyethyl)-AMP + GDP + phosphate + 2 H(+). The protein operates within purine metabolism; AMP biosynthesis via de novo pathway; AMP from IMP: step 1/2. Functionally, plays an important role in the de novo pathway of purine nucleotide biosynthesis. Catalyzes the first committed step in the biosynthesis of AMP from IMP. This chain is Adenylosuccinate synthetase, found in Syntrophobacter fumaroxidans (strain DSM 10017 / MPOB).